A 209-amino-acid polypeptide reads, in one-letter code: Uracil phosphoribosyltransferase (209 aa).

Residues Arg-79, Arg-104, and 131–139 (DPMLATGGS) contribute to the 5-phospho-alpha-D-ribose 1-diphosphate site. Uracil is bound by residues Ile-194 and 199–201 (GDA). A 5-phospho-alpha-D-ribose 1-diphosphate-binding site is contributed by Asp-200.

Belongs to the UPRTase family. Mg(2+) serves as cofactor.

The catalysed reaction is UMP + diphosphate = 5-phospho-alpha-D-ribose 1-diphosphate + uracil. It participates in pyrimidine metabolism; UMP biosynthesis via salvage pathway; UMP from uracil: step 1/1. With respect to regulation, allosterically activated by GTP. In terms of biological role, catalyzes the conversion of uracil and 5-phospho-alpha-D-ribose 1-diphosphate (PRPP) to UMP and diphosphate. This Geobacter sp. (strain M21) protein is Uracil phosphoribosyltransferase.